A 199-amino-acid polypeptide reads, in one-letter code: Pyridoxine/pyridoxamine 5'-phosphate oxidase (199 aa).

FMN-binding positions include 44 to 49 (RTVLLK), 59 to 60 (YT), K66, and Q91. K49 contributes to the substrate binding site. Substrate contacts are provided by Y109, R113, and S117. Residues 126-127 (QS) and W171 each bind FMN. 177–179 (RLH) contributes to the substrate binding site. An FMN-binding site is contributed by R181.

It belongs to the pyridoxamine 5'-phosphate oxidase family. Homodimer. FMN serves as cofactor.

It carries out the reaction pyridoxamine 5'-phosphate + O2 + H2O = pyridoxal 5'-phosphate + H2O2 + NH4(+). The catalysed reaction is pyridoxine 5'-phosphate + O2 = pyridoxal 5'-phosphate + H2O2. It functions in the pathway cofactor metabolism; pyridoxal 5'-phosphate salvage; pyridoxal 5'-phosphate from pyridoxamine 5'-phosphate: step 1/1. It participates in cofactor metabolism; pyridoxal 5'-phosphate salvage; pyridoxal 5'-phosphate from pyridoxine 5'-phosphate: step 1/1. Its function is as follows. Catalyzes the oxidation of either pyridoxine 5'-phosphate (PNP) or pyridoxamine 5'-phosphate (PMP) into pyridoxal 5'-phosphate (PLP). This is Pyridoxine/pyridoxamine 5'-phosphate oxidase from Xanthomonas euvesicatoria pv. vesicatoria (strain 85-10) (Xanthomonas campestris pv. vesicatoria).